The following is a 1354-amino-acid chain: Phosphoribosylformylglycinamidine synthase (1354 aa).

Residues Gly-327 to Asp-338, Ser-407 to Phe-409, and Ala-714 each bind ATP. Asp-715, Glu-754, Asn-758, and Asp-918 together coordinate Mg(2+). Ser-920 lines the ATP pocket. A Glutamine amidotransferase type-1 domain is found at Val-1087–Pro-1337. Cys-1180 serves as the catalytic Nucleophile. Active-site residues include His-1310 and Glu-1312.

The protein in the N-terminal section; belongs to the FGAMS family.

It catalyses the reaction N(2)-formyl-N(1)-(5-phospho-beta-D-ribosyl)glycinamide + L-glutamine + ATP + H2O = 2-formamido-N(1)-(5-O-phospho-beta-D-ribosyl)acetamidine + L-glutamate + ADP + phosphate + H(+). Its pathway is purine metabolism; IMP biosynthesis via de novo pathway; 5-amino-1-(5-phospho-D-ribosyl)imidazole from N(2)-formyl-N(1)-(5-phospho-D-ribosyl)glycinamide: step 1/2. Its function is as follows. Phosphoribosylformylglycinamidine synthase involved in the purines biosynthetic pathway. Catalyzes the ATP-dependent conversion of formylglycinamide ribonucleotide (FGAR) and glutamine to yield formylglycinamidine ribonucleotide (FGAM) and glutamate. Because of its role in metabolisms, is involved in sleep regulation. The protein is Phosphoribosylformylglycinamidine synthase of Drosophila melanogaster (Fruit fly).